A 434-amino-acid polypeptide reads, in one-letter code: Nicotinate phosphoribosyltransferase (434 aa).

His242 is subject to Phosphohistidine; by autocatalysis.

This sequence belongs to the NAPRTase family. Post-translationally, transiently phosphorylated on a His residue during the reaction cycle. Phosphorylation strongly increases the affinity for substrates and increases the rate of nicotinate D-ribonucleotide production. Dephosphorylation regenerates the low-affinity form of the enzyme, leading to product release.

It catalyses the reaction nicotinate + 5-phospho-alpha-D-ribose 1-diphosphate + ATP + H2O = nicotinate beta-D-ribonucleotide + ADP + phosphate + diphosphate. Its pathway is cofactor biosynthesis; NAD(+) biosynthesis; nicotinate D-ribonucleotide from nicotinate: step 1/1. In terms of biological role, catalyzes the synthesis of beta-nicotinate D-ribonucleotide from nicotinate and 5-phospho-D-ribose 1-phosphate at the expense of ATP. The sequence is that of Nicotinate phosphoribosyltransferase from Brucella anthropi (strain ATCC 49188 / DSM 6882 / CCUG 24695 / JCM 21032 / LMG 3331 / NBRC 15819 / NCTC 12168 / Alc 37) (Ochrobactrum anthropi).